The primary structure comprises 756 residues: Ent-kaur-16-ene synthase, chloroplastic (756 aa).

Mg(2+)-binding residues include Asp496, Asp500, Asn639, and Glu647. A DDXXD motif motif is present at residues 496–500 (DDFFD).

Belongs to the terpene synthase family. It depends on Mg(2+) as a cofactor. As to expression, highly expressed in panicles and at lower levels in leaves and stems.

It is found in the plastid. Its subcellular location is the chloroplast. It carries out the reaction ent-copalyl diphosphate = ent-kaur-16-ene + diphosphate. It functions in the pathway plant hormone biosynthesis; gibberellin biosynthesis. In terms of biological role, catalyzes the conversion of ent-copalyl diphosphate to the gibberellin precursor ent-kaur-16-ene. The sequence is that of Ent-kaur-16-ene synthase, chloroplastic (KS1) from Oryza sativa subsp. japonica (Rice).